A 495-amino-acid chain; its full sequence is Glycogen synthase (495 aa).

An ADP-alpha-D-glucose-binding site is contributed by Lys15.

The protein belongs to the glycosyltransferase 1 family. Bacterial/plant glycogen synthase subfamily.

The catalysed reaction is [(1-&gt;4)-alpha-D-glucosyl](n) + ADP-alpha-D-glucose = [(1-&gt;4)-alpha-D-glucosyl](n+1) + ADP + H(+). It functions in the pathway glycan biosynthesis; glycogen biosynthesis. Its function is as follows. Synthesizes alpha-1,4-glucan chains using ADP-glucose. The polypeptide is Glycogen synthase (Variovorax paradoxus (strain S110)).